Consider the following 211-residue polypeptide: 5,6-dimethylbenzimidazole synthase (211 aa).

Residues 22-26, Ser-50, Leu-99, and Ser-158 contribute to the FMN site; that span reads RRDVR.

The protein belongs to the BluB family. Homooctamer.

The catalysed reaction is FMNH2 + O2 = dialurate + 5,6-dimethylbenzimidazole + D-erythrose 4-phosphate + H(+). Its function is as follows. Involved in the biosynthesis of cobalamin (vitamin B12). Catalyzes the oxidative fragmentation and contraction of the isoalloxazine heterocycle and the cleavage of the ribityl tail of FMNH(2) to form 5,6-dimethylbenzimidazole (DMB) and D-erythrose 4-phosphate (E4P). NAD(P)H is only required initially to reduce FMN and oxygen drives the oxidative fragmentation. This chain is 5,6-dimethylbenzimidazole synthase, found in Rhodospirillum rubrum (strain ATCC 11170 / ATH 1.1.1 / DSM 467 / LMG 4362 / NCIMB 8255 / S1).